Reading from the N-terminus, the 364-residue chain is tRNA 2-selenouridine synthase (364 aa).

Residues 14–137 (LIADTPIIDV…LRQTAIQATI (124 aa)) form the Rhodanese domain. Cysteine 97 acts as the S-selanylcysteine intermediate in catalysis.

The protein belongs to the SelU family. As to quaternary structure, monomer.

It catalyses the reaction 5-methylaminomethyl-2-thiouridine(34) in tRNA + selenophosphate + (2E)-geranyl diphosphate + H2O + H(+) = 5-methylaminomethyl-2-selenouridine(34) in tRNA + (2E)-thiogeraniol + phosphate + diphosphate. The enzyme catalyses 5-methylaminomethyl-2-thiouridine(34) in tRNA + (2E)-geranyl diphosphate = 5-methylaminomethyl-S-(2E)-geranyl-thiouridine(34) in tRNA + diphosphate. The catalysed reaction is 5-methylaminomethyl-S-(2E)-geranyl-thiouridine(34) in tRNA + selenophosphate + H(+) = 5-methylaminomethyl-2-(Se-phospho)selenouridine(34) in tRNA + (2E)-thiogeraniol. It carries out the reaction 5-methylaminomethyl-2-(Se-phospho)selenouridine(34) in tRNA + H2O = 5-methylaminomethyl-2-selenouridine(34) in tRNA + phosphate. Its function is as follows. Involved in the post-transcriptional modification of the uridine at the wobble position (U34) of tRNA(Lys), tRNA(Glu) and tRNA(Gln). Catalyzes the conversion of 2-thiouridine (S2U-RNA) to 2-selenouridine (Se2U-RNA). Acts in a two-step process involving geranylation of 2-thiouridine (S2U) to S-geranyl-2-thiouridine (geS2U) and subsequent selenation of the latter derivative to 2-selenouridine (Se2U) in the tRNA chain. The sequence is that of tRNA 2-selenouridine synthase from Escherichia coli O81 (strain ED1a).